The chain runs to 38 residues: Cytochrome b6-f complex subunit 5 (38 aa).

The chain crosses the membrane as a helical span at residues 5 to 25 (LLSGIVLGLIPITLAGLFVTA).

The protein belongs to the PetG family. The 4 large subunits of the cytochrome b6-f complex are cytochrome b6, subunit IV (17 kDa polypeptide, PetD), cytochrome f and the Rieske protein, while the 4 small subunits are PetG, PetL, PetM and PetN. The complex functions as a dimer.

Its subcellular location is the plastid. The protein resides in the chloroplast thylakoid membrane. Its function is as follows. Component of the cytochrome b6-f complex, which mediates electron transfer between photosystem II (PSII) and photosystem I (PSI), cyclic electron flow around PSI, and state transitions. PetG is required for either the stability or assembly of the cytochrome b6-f complex. This is Cytochrome b6-f complex subunit 5 from Adiantum capillus-veneris (Maidenhair fern).